Reading from the N-terminus, the 150-residue chain is Large ribosomal subunit protein uL13 (150 aa).

It belongs to the universal ribosomal protein uL13 family. Part of the 50S ribosomal subunit.

Its function is as follows. This protein is one of the early assembly proteins of the 50S ribosomal subunit, although it is not seen to bind rRNA by itself. It is important during the early stages of 50S assembly. This is Large ribosomal subunit protein uL13 from Mesoplasma florum (strain ATCC 33453 / NBRC 100688 / NCTC 11704 / L1) (Acholeplasma florum).